A 376-amino-acid polypeptide reads, in one-letter code: Probable cysteine protease RDL3 (376 aa).

The first 27 residues, 1 to 27 (MAISFRTLALLTLSVLLISISLGVVTA), serve as a signal peptide directing secretion. The propeptide at 28–126 (TESQRNEGEV…ERYQYKEGDV (99 aa)) is activation peptide. N-linked (GlcNAc...) asparagine glycosylation is present at asparagine 80. Disulfide bonds link cysteine 149/cysteine 192 and cysteine 183/cysteine 226. Residue cysteine 152 is part of the active site. A glycan (N-linked (GlcNAc...) asparagine) is linked at asparagine 270. Cysteine 283 and cysteine 336 are joined by a disulfide. Catalysis depends on residues histidine 290 and asparagine 311. Asparagine 349 carries an N-linked (GlcNAc...) asparagine glycan.

It belongs to the peptidase C1 family. Expressed in root hairs.

Its function is as follows. Probable thiol protease. The protein is Probable cysteine protease RDL3 of Arabidopsis thaliana (Mouse-ear cress).